We begin with the raw amino-acid sequence, 525 residues long: ATP synthase subunit alpha (525 aa).

172 to 179 (GDRQTGKT) contributes to the ATP binding site.

This sequence belongs to the ATPase alpha/beta chains family. As to quaternary structure, F-type ATPases have 2 components, CF(1) - the catalytic core - and CF(0) - the membrane proton channel. CF(1) has five subunits: alpha(3), beta(3), gamma(1), delta(1), epsilon(1). CF(0) has three main subunits: a(1), b(2) and c(9-12). The alpha and beta chains form an alternating ring which encloses part of the gamma chain. CF(1) is attached to CF(0) by a central stalk formed by the gamma and epsilon chains, while a peripheral stalk is formed by the delta and b chains.

It localises to the cell inner membrane. It carries out the reaction ATP + H2O + 4 H(+)(in) = ADP + phosphate + 5 H(+)(out). Functionally, produces ATP from ADP in the presence of a proton gradient across the membrane. The alpha chain is a regulatory subunit. This chain is ATP synthase subunit alpha, found in Parabacteroides distasonis (strain ATCC 8503 / DSM 20701 / CIP 104284 / JCM 5825 / NCTC 11152).